Reading from the N-terminus, the 96-residue chain is Small ribosomal subunit protein uS15 (96 aa).

Belongs to the universal ribosomal protein uS15 family. In terms of assembly, part of the 30S ribosomal subunit. Forms a bridge to the 50S subunit in the 70S ribosome, contacting the 23S rRNA.

One of the primary rRNA binding proteins, it binds directly to 16S rRNA where it helps nucleate assembly of the platform of the 30S subunit by binding and bridging several RNA helices of the 16S rRNA. Its function is as follows. Forms an intersubunit bridge (bridge B4) with the 23S rRNA of the 50S subunit in the ribosome. The chain is Small ribosomal subunit protein uS15 from Streptomyces griseus subsp. griseus (strain JCM 4626 / CBS 651.72 / NBRC 13350 / KCC S-0626 / ISP 5235).